A 466-amino-acid polypeptide reads, in one-letter code: 3-isopropylmalate dehydratase large subunit (466 aa).

3 residues coordinate [4Fe-4S] cluster: cysteine 347, cysteine 407, and cysteine 410.

This sequence belongs to the aconitase/IPM isomerase family. LeuC type 1 subfamily. Heterodimer of LeuC and LeuD. [4Fe-4S] cluster serves as cofactor.

It catalyses the reaction (2R,3S)-3-isopropylmalate = (2S)-2-isopropylmalate. The protein operates within amino-acid biosynthesis; L-leucine biosynthesis; L-leucine from 3-methyl-2-oxobutanoate: step 2/4. Functionally, catalyzes the isomerization between 2-isopropylmalate and 3-isopropylmalate, via the formation of 2-isopropylmaleate. The sequence is that of 3-isopropylmalate dehydratase large subunit from Shigella flexneri serotype 5b (strain 8401).